Reading from the N-terminus, the 126-residue chain is Fluoride-specific ion channel FluC (126 aa).

The next 4 helical transmembrane spans lie at 5 to 25 (ILCV…FYFG), 34 to 54 (YIFI…GFVL), 71 to 91 (VTGL…NAVF), and 100 to 120 (FFLN…LGIY). Residues Gly-76 and Thr-79 each coordinate Na(+).

This sequence belongs to the fluoride channel Fluc/FEX (TC 1.A.43) family.

It localises to the cell inner membrane. It catalyses the reaction fluoride(in) = fluoride(out). Its activity is regulated as follows. Na(+) is not transported, but it plays an essential structural role and its presence is essential for fluoride channel function. In terms of biological role, fluoride-specific ion channel. Important for reducing fluoride concentration in the cell, thus reducing its toxicity. The chain is Fluoride-specific ion channel FluC from Campylobacter hominis (strain ATCC BAA-381 / DSM 21671 / CCUG 45161 / LMG 19568 / NCTC 13146 / CH001A).